The sequence spans 1131 residues: Probable secreted beta-glucosidase adg3 (1131 aa).

Residues 1 to 23 form the signal peptide; that stretch reads MPSKIEKICLLLLGFTAASNVNA. N-linked (GlcNAc...) asparagine glycosylation is found at N58, N123, N252, N551, N593, N631, and N689. Positions 609-819 are disordered; it reads GTTSSTSEIV…SSPISSNSVT (211 aa). Low complexity predominate over residues 623–715; sequence SNSNTGSLNG…YSDPTTTITS (93 aa). Over residues 716–725 the composition is skewed to polar residues; sequence EVSSILSSPT. A compositionally biased stretch (low complexity) spans 726–737; sequence SMQSSVSRPQSS. The span at 738 to 763 shows a compositional bias: polar residues; that stretch reads GDASGFNTIFTSISQSSDGETSGYTI. Low complexity-rich tracts occupy residues 764–773 and 780–819; these read SSNSSQNSAS and TSSSSSATPTITQSSISTSVSSQSSMNSSYSSPISSNSVT. 3 N-linked (GlcNAc...) asparagine glycosylation sites follow: N766, N806, and N857. The segment covering 893-909 has biased composition (low complexity); it reads STSNSGSTSYSIPSSSS. Positions 893-918 are disordered; that stretch reads STSNSGSTSYSIPSSSSRNEGTTSYS. Residue N920 is glycosylated (N-linked (GlcNAc...) asparagine). Residues 977–1027 are compositionally biased toward low complexity; sequence LTVKPESSLSSSTTSGLTSSSSTIPSSTRSESNSESASTSSASKRSSSSTS. Positions 977–1031 are disordered; the sequence is LTVKPESSLSSSTTSGLTSSSSTIPSSTRSESNSESASTSSASKRSSSSTSLVQS.

Belongs to the SUN family.

The protein localises to the secreted. Its function is as follows. Cell surface beta-glucosidase involved in cell wall biogenesis,. The polypeptide is Probable secreted beta-glucosidase adg3 (adg3) (Schizosaccharomyces pombe (strain 972 / ATCC 24843) (Fission yeast)).